The sequence spans 430 residues: Trigger factor (430 aa).

A PPIase FKBP-type domain is found at 163–248 (GDTVVFDFAG…IHEIKAQELP (86 aa)).

The protein belongs to the FKBP-type PPIase family. Tig subfamily.

It localises to the cytoplasm. The enzyme catalyses [protein]-peptidylproline (omega=180) = [protein]-peptidylproline (omega=0). In terms of biological role, involved in protein export. Acts as a chaperone by maintaining the newly synthesized protein in an open conformation. Functions as a peptidyl-prolyl cis-trans isomerase. The sequence is that of Trigger factor from Exiguobacterium sibiricum (strain DSM 17290 / CCUG 55495 / CIP 109462 / JCM 13490 / 255-15).